The sequence spans 1212 residues: Filamin-A-interacting protein 1 (1212 aa).

Positions 1 to 15 (MRSRNQGGESSSNGH) are enriched in polar residues. The tract at residues 1-73 (MRSRNQGGES…SEKKTKKSVE (73 aa)) is disordered. Basic and acidic residues-rich tracts occupy residues 32–47 (PSED…KEED) and 60–73 (PSGE…KSVE). A Phosphoserine modification is found at Ser137. Coiled-coil stretches lie at residues 191–575 (DYMN…DELM) and 623–777 (PEDN…ELEL). 2 disordered regions span residues 871–898 (WMRK…HPGE) and 948–975 (KPRI…GPER). Ser978 bears the Phosphoserine mark. Residues 1102-1190 (VSTGTVLRSP…TKFQPRAETQ (89 aa)) are disordered. Low complexity predominate over residues 1124–1138 (VTSTITITPVTTSST). Positions 1139–1155 (RGTQSVSGQDGSSQRPT) are enriched in polar residues.

It belongs to the FILIP1 family. Interacts with FLNA. Interacts with RHOD (in GTP-bound form). In terms of tissue distribution, expressed in muscle tissue, including heart. Found in cortical ventricular zone.

Its subcellular location is the cytoplasm. It is found in the cytoskeleton. The protein resides in the stress fiber. Its function is as follows. By acting through a filamin-A/F-actin axis, it controls the start of neocortical cell migration from the ventricular zone. May be able to induce the degradation of Filamin A. In Rattus norvegicus (Rat), this protein is Filamin-A-interacting protein 1 (Filip1).